The chain runs to 529 residues: Cytochrome P450 monooxygenase okaD (529 aa).

Residues 13 to 35 form a helical membrane-spanning segment; the sequence is LPAQHLLASLALVGALLSVGYLL. C435 contributes to the heme binding site.

It belongs to the cytochrome P450 family. It depends on heme as a cofactor.

It localises to the membrane. It catalyses the reaction okaramine C + 2 reduced [NADPH--hemoprotein reductase] + 2 O2 = okaramine A + 2 oxidized [NADPH--hemoprotein reductase] + 4 H2O + 2 H(+). The protein operates within alkaloid biosynthesis. Functionally, cytochrome P450 monooxygenase; part of the gene cluster that mediates the biosynthesis of okaramine B, a prenylated indole alkaloid that possesses an unusual octacyclic ring system, including a four-membered azetidine ring and an eight-membered azocine ring, and that exhibits insecticidal activity against silkworm larvae. Within the pathway, okaD likely catalyzes a key step in forming the eight-membered ring of okaramine A using as substrate okaramine C. The biosynthesis begins with the NRPS okaA that condenses two tryptophan molecules into cyclo(L-Trp-L-Trp). Prenylation by the prenyltransferase okaC then leads to the formation of cyclo(N8-(alpha,alpha-dimethylallyl)-L-Trp-6a-(alpha,alpha-dime-thylallyl)-L-Trp). This is followed by indole 2,3-epoxidation by the FAD-dependent monooxygenase okaB to facilitate the formation of the hexahydropyrrolo[2,3-b]indole (HPI) moiety of okaramine C. The cytochrome P450 monooxygenase okaD then likely catalyzes formation of the eight-membered ring of okaramine A. The dioxygenase okaE further forms the unusual 2-dimethyl-3-methyl-azetidine ring to yield 12-deshydroxyl okaramine E, as well as the hydroxylation of 12-deshydroxyl okaramine E to produce okaramine E. The cytochrome P450 monoxygenase okaG converts 12-deshydroxyl okaramine E into 3-desmethyl okaramine B which is further methylated by the methyltransferase okaF into okaramine B. In a shunt pathway, okaG and okaF together are also able to convert okaramine E into okaramine D. Okaramine H is produced by nonenzymatic conversion from okaramine A. This is Cytochrome P450 monooxygenase okaD from Penicillium ochrochloron.